A 110-amino-acid chain; its full sequence is ATP synthase subunit c (110 aa).

3 helical membrane passes run 4 to 24 (FFVI…VFAA), 37 to 57 (ATAG…AGMG), and 81 to 101 (FIVG…FVLI).

It belongs to the ATPase C chain family. As to quaternary structure, F-type ATPases have 2 components, F(1) - the catalytic core - and F(0) - the membrane proton channel. F(1) has five subunits: alpha(3), beta(3), gamma(1), delta(1), epsilon(1). F(0) has three main subunits: a(1), b(2) and c(10-14). The alpha and beta chains form an alternating ring which encloses part of the gamma chain. F(1) is attached to F(0) by a central stalk formed by the gamma and epsilon chains, while a peripheral stalk is formed by the delta and b chains.

It localises to the cell inner membrane. F(1)F(0) ATP synthase produces ATP from ADP in the presence of a proton or sodium gradient. F-type ATPases consist of two structural domains, F(1) containing the extramembraneous catalytic core and F(0) containing the membrane proton channel, linked together by a central stalk and a peripheral stalk. During catalysis, ATP synthesis in the catalytic domain of F(1) is coupled via a rotary mechanism of the central stalk subunits to proton translocation. Functionally, key component of the F(0) channel; it plays a direct role in translocation across the membrane. A homomeric c-ring of between 10-14 subunits forms the central stalk rotor element with the F(1) delta and epsilon subunits. The sequence is that of ATP synthase subunit c from Thermodesulfovibrio yellowstonii (strain ATCC 51303 / DSM 11347 / YP87).